The following is a 209-amino-acid chain: FK506-binding protein 2B (209 aa).

The signal sequence occupies residues 1 to 19; it reads MRFSLLALLGTIVATSVSA. Residues 47–136 form the PPIase FKBP-type domain; that stretch reads GDELSMHYTG…VFEVELLEIK (90 aa). A helical transmembrane segment spans residues 157–177; sequence FTSPSFLVSTGIIVALFLIVF. Residues 178 to 207 adopt a coiled-coil conformation; that stretch reads KMAKKQDIAEANEKAAAATAEASTEKKEEK. The segment at 190-209 is disordered; the sequence is EKAAAATAEASTEKKEEKKE. Positions 200–209 are enriched in basic and acidic residues; the sequence is STEKKEEKKE.

The protein belongs to the FKBP-type PPIase family. FKBP2 subfamily.

Its subcellular location is the membrane. It carries out the reaction [protein]-peptidylproline (omega=180) = [protein]-peptidylproline (omega=0). Inhibited by both FK506 and rapamycin. In terms of biological role, PPIases accelerate the folding of proteins. It catalyzes the cis-trans isomerization of proline imidic peptide bonds in oligopeptides. The chain is FK506-binding protein 2B (FKBP3) from Rhizopus delemar (strain RA 99-880 / ATCC MYA-4621 / FGSC 9543 / NRRL 43880) (Mucormycosis agent).